A 353-amino-acid polypeptide reads, in one-letter code: Phospho-N-acetylmuramoyl-pentapeptide-transferase (353 aa).

The next 10 membrane-spanning stretches (helical) occupy residues 24–44 (LGFF…ILWA), 66–86 (TPTM…VLCA), 88–108 (LGNL…FVGF), 129–149 (FGML…KGLD), 160–180 (PLFE…FLST), 192–212 (GLAS…VYVA), 229–249 (VGEL…FLWY), 256–276 (VFMG…NAIV), 281–301 (ILLV…ILQV), and 330–350 (KVIV…LLSL).

This sequence belongs to the glycosyltransferase 4 family. MraY subfamily. The cofactor is Mg(2+).

The protein localises to the cell inner membrane. It catalyses the reaction UDP-N-acetyl-alpha-D-muramoyl-L-alanyl-gamma-D-glutamyl-meso-2,6-diaminopimeloyl-D-alanyl-D-alanine + di-trans,octa-cis-undecaprenyl phosphate = di-trans,octa-cis-undecaprenyl diphospho-N-acetyl-alpha-D-muramoyl-L-alanyl-D-glutamyl-meso-2,6-diaminopimeloyl-D-alanyl-D-alanine + UMP. The protein operates within cell wall biogenesis; peptidoglycan biosynthesis. Catalyzes the initial step of the lipid cycle reactions in the biosynthesis of the cell wall peptidoglycan: transfers peptidoglycan precursor phospho-MurNAc-pentapeptide from UDP-MurNAc-pentapeptide onto the lipid carrier undecaprenyl phosphate, yielding undecaprenyl-pyrophosphoryl-MurNAc-pentapeptide, known as lipid I. This is Phospho-N-acetylmuramoyl-pentapeptide-transferase from Helicobacter pylori (strain HPAG1).